The primary structure comprises 228 residues: MAYPLQLGLQDASSPIMEELTNFHDHTLMIVFLISSLVLYLISLMLTTKLIHTSTMDAQEVETIWTILPAIILILIALPSLRILYMMDEINNPVLTVKTMGHQWYWSYEYTDYEDLCFDSYMTPTNELKPGELRLLEVDNRVVLPMELPIRMLISSEDVLHSWAVPSLGLKTDAIPGRLNQATVTSNRPGVFYGQCSEICGSNHSFMPIVLEMIPLKLFENWSVSMTQ.

Over 1-14 (MAYPLQLGLQDASS) the chain is Mitochondrial intermembrane. The helical transmembrane segment at 15–45 (PIMEELTNFHDHTLMIVFLISSLVLYLISLM) threads the bilayer. At 46-59 (LTTKLIHTSTMDAQ) the chain is on the mitochondrial matrix side. The chain crosses the membrane as a helical span at residues 60 to 87 (EVETIWTILPAIILILIALPSLRILYMM). At 88-228 (DEINNPVLTV…FENWSVSMTQ (141 aa)) the chain is on the mitochondrial intermembrane side. The Cu cation site is built by His161, Cys196, Glu198, Cys200, His204, and Met207. Mg(2+) is bound at residue Glu198.

It belongs to the cytochrome c oxidase subunit 2 family. In terms of assembly, component of the cytochrome c oxidase (complex IV, CIV), a multisubunit enzyme composed of 14 subunits. The complex is composed of a catalytic core of 3 subunits MT-CO1, MT-CO2 and MT-CO3, encoded in the mitochondrial DNA, and 11 supernumerary subunits COX4I, COX5A, COX5B, COX6A, COX6B, COX6C, COX7A, COX7B, COX7C, COX8 and NDUFA4, which are encoded in the nuclear genome. The complex exists as a monomer or a dimer and forms supercomplexes (SCs) in the inner mitochondrial membrane with NADH-ubiquinone oxidoreductase (complex I, CI) and ubiquinol-cytochrome c oxidoreductase (cytochrome b-c1 complex, complex III, CIII), resulting in different assemblies (supercomplex SCI(1)III(2)IV(1) and megacomplex MCI(2)III(2)IV(2)). Found in a complex with TMEM177, COA6, COX18, COX20, SCO1 and SCO2. Interacts with TMEM177 in a COX20-dependent manner. Interacts with COX20. Interacts with COX16. The cofactor is Cu cation.

Its subcellular location is the mitochondrion inner membrane. The catalysed reaction is 4 Fe(II)-[cytochrome c] + O2 + 8 H(+)(in) = 4 Fe(III)-[cytochrome c] + 2 H2O + 4 H(+)(out). In terms of biological role, component of the cytochrome c oxidase, the last enzyme in the mitochondrial electron transport chain which drives oxidative phosphorylation. The respiratory chain contains 3 multisubunit complexes succinate dehydrogenase (complex II, CII), ubiquinol-cytochrome c oxidoreductase (cytochrome b-c1 complex, complex III, CIII) and cytochrome c oxidase (complex IV, CIV), that cooperate to transfer electrons derived from NADH and succinate to molecular oxygen, creating an electrochemical gradient over the inner membrane that drives transmembrane transport and the ATP synthase. Cytochrome c oxidase is the component of the respiratory chain that catalyzes the reduction of oxygen to water. Electrons originating from reduced cytochrome c in the intermembrane space (IMS) are transferred via the dinuclear copper A center (CU(A)) of subunit 2 and heme A of subunit 1 to the active site in subunit 1, a binuclear center (BNC) formed by heme A3 and copper B (CU(B)). The BNC reduces molecular oxygen to 2 water molecules using 4 electrons from cytochrome c in the IMS and 4 protons from the mitochondrial matrix. This chain is Cytochrome c oxidase subunit 2 (MT-CO2), found in Meriones shawi (Shaw's jird).